The chain runs to 122 residues: Small ribosomal subunit protein uS13 (122 aa).

The disordered stretch occupies residues 95–122 (GLPVRGQRTHTNARTRKGPAKPIAGKKK).

Belongs to the universal ribosomal protein uS13 family. In terms of assembly, part of the 30S ribosomal subunit. Forms a loose heterodimer with protein S19. Forms two bridges to the 50S subunit in the 70S ribosome.

Located at the top of the head of the 30S subunit, it contacts several helices of the 16S rRNA. In the 70S ribosome it contacts the 23S rRNA (bridge B1a) and protein L5 of the 50S subunit (bridge B1b), connecting the 2 subunits; these bridges are implicated in subunit movement. Contacts the tRNAs in the A and P-sites. This is Small ribosomal subunit protein uS13 from Rhodospirillum rubrum (strain ATCC 11170 / ATH 1.1.1 / DSM 467 / LMG 4362 / NCIMB 8255 / S1).